We begin with the raw amino-acid sequence, 161 residues long: Protein ZMO0507 (161 aa).

It belongs to the free Met sulfoxide reductase family.

This is Protein ZMO0507 from Zymomonas mobilis subsp. mobilis (strain ATCC 31821 / ZM4 / CP4).